The chain runs to 162 residues: Urease subunit beta (162 aa).

The segment at 116–162 is disordered; the sequence is WRRSSAAGDAPQELPQVEAAERGRKLDDATDVDTNVGTEEGFEEGRN. Basic and acidic residues predominate over residues 134-143; that stretch reads AAERGRKLDD.

This sequence belongs to the urease beta subunit family. In terms of assembly, heterotrimer of UreA (gamma), UreB (beta) and UreC (alpha) subunits. Three heterotrimers associate to form the active enzyme.

The protein localises to the cytoplasm. It catalyses the reaction urea + 2 H2O + H(+) = hydrogencarbonate + 2 NH4(+). It participates in nitrogen metabolism; urea degradation; CO(2) and NH(3) from urea (urease route): step 1/1. In Corynebacterium glutamicum (strain ATCC 13032 / DSM 20300 / JCM 1318 / BCRC 11384 / CCUG 27702 / LMG 3730 / NBRC 12168 / NCIMB 10025 / NRRL B-2784 / 534), this protein is Urease subunit beta.